A 284-amino-acid polypeptide reads, in one-letter code: Bifunctional protein FolD (284 aa).

Residues 166 to 168 (GAS) and isoleucine 232 each bind NADP(+).

Belongs to the tetrahydrofolate dehydrogenase/cyclohydrolase family. Homodimer.

It carries out the reaction (6R)-5,10-methylene-5,6,7,8-tetrahydrofolate + NADP(+) = (6R)-5,10-methenyltetrahydrofolate + NADPH. The catalysed reaction is (6R)-5,10-methenyltetrahydrofolate + H2O = (6R)-10-formyltetrahydrofolate + H(+). The protein operates within one-carbon metabolism; tetrahydrofolate interconversion. Its function is as follows. Catalyzes the oxidation of 5,10-methylenetetrahydrofolate to 5,10-methenyltetrahydrofolate and then the hydrolysis of 5,10-methenyltetrahydrofolate to 10-formyltetrahydrofolate. The sequence is that of Bifunctional protein FolD from Pseudoalteromonas translucida (strain TAC 125).